The following is a 67-amino-acid chain: Beta-defensin 103A (67 aa).

The signal sequence occupies residues methionine 1–glycine 22. 3 disulfides stabilise this stretch: cysteine 33–cysteine 62, cysteine 40–cysteine 55, and cysteine 45–cysteine 63.

This sequence belongs to the beta-defensin family.

It is found in the secreted. Exhibits antimicrobial activity against Gram-positive and Gram-negative bacteria. The polypeptide is Beta-defensin 103A (DEFB103A) (Equus caballus (Horse)).